The primary structure comprises 873 residues: Sister chromatid cohesion protein PDS5 homolog C (873 aa).

4 HEAT repeats span residues 53-92 (NALTPLMKGLVGGKLFKHSDVDVKVAVAACISEITRITAP), 99-136 (DQMKEVFKLIVSSFEDLVDKSSRSYAKRISILETVAKV), 149-187 (ALLIEMFQHFLKAIRDHHSGNVFSSMENIMTLVLEESED), and 189-227 (PSEMLSPILHSVKKDDEISQVSRRLAEQVLSNCASKLKT). A compositionally biased stretch (basic and acidic residues) spans 266–301 (NEKEDSQGHIKRETEVEKAAEISTPERTDAPKDESG). Disordered stretches follow at residues 266 to 611 (NEKE…LVGS) and 658 to 873 (SPLD…KRKR). Position 289 is a phosphothreonine (Thr-289). Residues 303–319 (SGVSNGVAQQNDSSVDT) are compositionally biased toward polar residues. Basic and acidic residues predominate over residues 320–334 (DSMKKQDDTGAKDEP). Residues 336–348 (QLDNPRNTDLNNT) show a composition bias toward polar residues. Composition is skewed to basic and acidic residues over residues 349–365 (TEEKPDVEHQIEEKENE) and 373–394 (DLSKDSDIKEETEPAELLDSKD). Polar residues-rich tracts occupy residues 400–411 (PVDSSVTAATSS) and 418–438 (SVQILPSKTSGDETANVSSPS). Basic and acidic residues predominate over residues 456–466 (KKKESSTEEVK). Low complexity predominate over residues 494 to 510 (KVASSSKTKPTVPPSKK). Basic and acidic residues-rich tracts occupy residues 511 to 526 (STSETKVAKQSEKKVV) and 535 to 555 (TKPKEEKKKPGRGKAIDEESL). Acidic residues predominate over residues 661 to 681 (DESELSQDEEAADQTGQEEDA). The span at 701-725 (SSAKKGSGAGSSKAKATPASKSSKT) shows a compositional bias: low complexity. Basic and acidic residues predominate over residues 726-746 (SQDDKTASKSKDSKEASREEE). The span at 747–757 (ASSEEESEEEE) shows a compositional bias: acidic residues. 2 stretches are compositionally biased toward low complexity: residues 795–814 (KATTSSKSKSGPVKSVPAKS) and 822–831 (KSGSASTPAS). The span at 844–853 (ETPKEPEPAT) shows a compositional bias: basic and acidic residues. The segment covering 854–866 (KAKSGKSQGSQSK) has biased composition (low complexity).

It belongs to the PDS5 family. Interacts with the cohesin complex.

It is found in the nucleus. Cohesin cofactor dispensable during the meiotic division but playing an important role in DNA repair by homologous recombination (HR) probably by helping SMC5/SMC6 complex. Regulator of sister chromatid cohesion in mitosis which may stabilize cohesin complex association with chromatin. May couple sister chromatid cohesion during mitosis to DNA replication. Cohesion ensures that chromosome partitioning is accurate in both meiotic and mitotic cells and plays an important role in DNA repair. This chain is Sister chromatid cohesion protein PDS5 homolog C, found in Arabidopsis thaliana (Mouse-ear cress).